The following is a 488-amino-acid chain: MRREVVFVTSEMYPFSKSGGLGDVLGAQPLALHRMGVPTSVITPFYGRLRTADYGIHLTVSDCHVGYPWDPITCDIYEADYHGMKVYFVHRGEYFDRRYYYNDHKGDYFDNCERFIFFCRAAMALLRRLGTPPAVLHANDWQSGLVPAYLHFWRQTDPFWADTRSVMTIHNLAFQGRFASRLFTGCGLPPQAWTMSGVEFWGDFNLLKAGIAYADMVTTVSPSYAREILGPAYGCGLEGILQVRQHALHGILNGADYGIWNPAQDKFLPCRYGPDDPQGFAGKQRCKAALLDELGLAPELAHRPVLGFIGRLRGQKGIDLLLDIVPRLMERNVGVIILGEGNLAHEARALDLMETYRGRLCAIVGYTEDLAHRIQAGSDIFLMPSRYEPCGLTQMYALRYGTPPVATAVGGLRDTIVPWPSPEATGFTFGRSDPQLFLEAILDAVHYWEHDTEGWRAMMTRAMHQDFSWERAGRSYLNLYRQLGFDFS.

ADP-alpha-D-glucose is bound at residue Lys-17.

Belongs to the glycosyltransferase 1 family. Bacterial/plant glycogen synthase subfamily.

The catalysed reaction is [(1-&gt;4)-alpha-D-glucosyl](n) + ADP-alpha-D-glucose = [(1-&gt;4)-alpha-D-glucosyl](n+1) + ADP + H(+). It functions in the pathway glycan biosynthesis; glycogen biosynthesis. Its function is as follows. Synthesizes alpha-1,4-glucan chains using ADP-glucose. In Nitratidesulfovibrio vulgaris (strain DSM 19637 / Miyazaki F) (Desulfovibrio vulgaris), this protein is Glycogen synthase.